The following is a 426-amino-acid chain: Formyl-CoA:oxalate CoA-transferase (426 aa).

Residues 17-18 (QS), R38, 72-75 (LDTK), 96-98 (NFG), R104, and 136-139 (KVYE) each bind CoA. D168 acts as the Nucleophile in catalysis. A substrate-binding site is contributed by 247-249 (GGQ).

The protein belongs to the CoA-transferase III family. Frc subfamily. As to quaternary structure, homodimer.

It carries out the reaction formyl-CoA + oxalate = oxalyl-CoA + formate. It functions in the pathway metabolic intermediate degradation; oxalate degradation; CO(2) and formate from oxalate: step 1/2. Its function is as follows. Involved in the catabolism of oxalate and in the adapatation to low pH via the induction of the oxalate-dependent acid tolerance response (ATR). Catalyzes the transfer of the CoA moiety from formyl-CoA to oxalate. The chain is Formyl-CoA:oxalate CoA-transferase from Rhodopseudomonas palustris (strain BisB18).